The chain runs to 403 residues: Glycerophosphocholine acyltransferase 1 (403 aa).

The Cytoplasmic portion of the chain corresponds to 1 to 112 (MDHLEFDENT…SGKVVRFRDK (112 aa)). A helical transmembrane segment spans residues 113–133 (LSFALGVSTCILTALLVGMAP). Residues 134-137 (ESMH) lie on the Lumenal side of the membrane. Residues 138-155 (LWYTIQLFVYLPLRYYTY) form a helical membrane-spanning segment. Topologically, residues 156 to 161 (QRKGYE) are cytoplasmic. A helical membrane pass occupies residues 162–182 (YFIADFCYWGNILLLVYIWIF). Residues 183–186 (PESR) lie on the Lumenal side of the membrane. A helical membrane pass occupies residues 187 to 207 (RLFILSYSISYGTLAWSVVAW). The Cytoplasmic segment spans residues 208 to 218 (RNSLLFHSIDK). A helical membrane pass occupies residues 219-239 (ITSLFIHFFPPLVLHTIVHLT). N240 is a glycosylation site (N-linked (GlcNAc...) asparagine). Topologically, residues 240-262 (NKSYLKDRFPAVLKVKKIDLLSS) are lumenal. The helical transmembrane segment at 263–283 (VEIASFFYALWQIWYYFFIQV) threads the bilayer. Residues 284 to 322 (GKQKQIQEGRPTSFTWLSKAYSKTKLGRAVAKLPQNLQP) lie on the Cytoplasmic side of the membrane. Residues 323-343 (FVFMIIQYLYSITTMLPCSLW) form a helical membrane-spanning segment. The Lumenal portion of the chain corresponds to 344–352 (YNNKLYSTA). A helical membrane pass occupies residues 353-373 (FLALIFGWSVWNGASYYIDVF). Residues 374-403 (GRRFQKELEALRQQLAETPTNSGSSSALSR) are Cytoplasmic-facing.

The protein belongs to the GPC1 family.

The protein resides in the endoplasmic reticulum membrane. It is found in the golgi apparatus membrane. The catalysed reaction is sn-glycerol 3-phosphocholine + an acyl-CoA = a 1-acyl-sn-glycero-3-phosphocholine + CoA. The enzyme catalyses sn-glycero-3-phosphoethanolamine + an acyl-CoA = a monoacyl-sn-glycero-3-phosphoethanolamine + CoA. It catalyses the reaction sn-glycero-3-phosphoethanolamine + (9Z)-octadecenoyl-CoA = (9Z-octadecenoyl)-sn-glycero-3-phosphoethanolamine + CoA. Its function is as follows. Glycerophosphocholine acyltransferase (GPCAT) that utilizes acyl-CoA to acylate glycero-3-phosphocholine (GPC), forming lysophosphatidylcholine (LPC). Shows broad acyl specificities with a preference for 16:0-CoA, polyunsaturated acyl-CoA, and the hydroxylated ricinoleoyl-CoA. Also catalyzes the acylation of glycero-3-phosphoethanolamine (GPE) with acyl-CoA. In addition to acyl-CoA, GPCAT efficiently utilizes LPC and lysophosphatidylethanolamine (LPE) as acyl donors in the acylation of GPC. Contributes to the maintenance of phosphatidylcholine (PC) homeostasis and might also have specific functions in acyl editing of PC, such as transferring acyl groups modified at the sn-2 position of PC to the sn-1. This is Glycerophosphocholine acyltransferase 1 from Schizosaccharomyces pombe (strain 972 / ATCC 24843) (Fission yeast).